We begin with the raw amino-acid sequence, 953 residues long: Translation initiation factor IF-2 (953 aa).

2 disordered regions span residues 52-247 and 279-363; these read KASK…LAEL and TKLK…TERK. 3 stretches are compositionally biased toward basic and acidic residues: residues 80–89, 98–111, and 140–188; these read TGSEHVEKTQ, FKAE…EQAA, and QGDK…ENHK. The segment covering 191-207 has biased composition (polar residues); the sequence is RFTNQKKQGRQEPQSKS. Over residues 229–247 the composition is skewed to basic and acidic residues; it reads RQSETRFRAQQEAKRLAEL. Residues 282 to 291 are compositionally biased toward polar residues; it reads KSSNISAKST. Residues 300-317 are compositionally biased toward basic and acidic residues; the sequence is ARPEKNRELTHHSQEGQK. Positions 322–338 are enriched in low complexity; the sequence is SWNSQNQVRNQKNSNWN. Basic residues predominate over residues 339–348; the sequence is KNKKTKKGKN. Residues 454–623 form the tr-type G domain; that stretch reads ERAPVVTIMG…LLVAEVEELK (170 aa). A G1 region spans residues 463–470; the sequence is GHVDHGKT. Position 463–470 (463–470) interacts with GTP; it reads GHVDHGKT. Residues 488–492 form a G2 region; the sequence is GITQH. The tract at residues 509–512 is G3; the sequence is DTPG. Residues 509–513 and 563–566 each bind GTP; these read DTPGH and NKID. The tract at residues 563 to 566 is G4; the sequence is NKID. The G5 stretch occupies residues 599-601; that stretch reads SAK.

Belongs to the TRAFAC class translation factor GTPase superfamily. Classic translation factor GTPase family. IF-2 subfamily.

The protein localises to the cytoplasm. Its function is as follows. One of the essential components for the initiation of protein synthesis. Protects formylmethionyl-tRNA from spontaneous hydrolysis and promotes its binding to the 30S ribosomal subunits. Also involved in the hydrolysis of GTP during the formation of the 70S ribosomal complex. In Streptococcus pyogenes serotype M5 (strain Manfredo), this protein is Translation initiation factor IF-2.